A 364-amino-acid chain; its full sequence is Aromatic prenyltransferase (364 aa).

An N-terminal signal peptide occupies residues 1–22 (MDRNQWTLALMALMRFAHRAFI). 2 N-linked (GlcNAc...) asparagine glycosylation sites follow: Asn142 and Asn337.

It belongs to the aromatic prenyltransferase family.

Functionally, prenyltransferase that attaches isoprenoid moieties to carbon atoms of aromatic substrates in an enzyme-catalyzed Friedel-Crafts reaction. In Talaromyces marneffei (strain ATCC 18224 / CBS 334.59 / QM 7333) (Penicillium marneffei), this protein is Aromatic prenyltransferase.